Here is a 1098-residue protein sequence, read N- to C-terminus: Bifunctional helicase and thymine dioxygenase JBP2 (1098 aa).

The tract at residues 1-540 (MLNGLTRVST…PPLFVPTRLA (540 aa)) is thymine dioxygenase. Residues His415, Asp417, and His465 each contribute to the Fe cation site. Arg479 provides a ligand contact to 2-oxoglutarate. Positions 541-1098 (SHLAPVQLAA…RYQESVRESE (558 aa)) are DNA Helicase. The region spanning 555-730 (VERTEKQSGC…YRLVGWVNKG (176 aa)) is the Helicase ATP-binding domain. Position 568–575 (568–575 (MTMGLGKT)) interacts with ATP. Positions 681–684 (DEGH) match the DEAH box motif. The region spanning 897-1057 (VLVDIVLRVQ…ALPDELEDCA (161 aa)) is the Helicase C-terminal domain.

In the C-terminal section; belongs to the SNF2/RAD54 helicase family. This sequence in the N-terminal section; belongs to the TET family. JBP2 subfamily. Requires Fe(2+) as cofactor.

The protein resides in the nucleus. It catalyses the reaction ATP + H2O = ADP + phosphate + H(+). The catalysed reaction is thymine + 2-oxoglutarate + O2 = 5-hydroxymethyluracil + succinate + CO2. Functionally, dioxygenase that catalyzes the first step of DNA base J (beta-d-glucosyl-HOMedU) biosynthesis by converting thymine to 5-hydroxymethyluracil (HOMedU). DNA base J is a hypermodified thymidine residue found in the genome of kinetoplastid parasites, which is localized primarily to repetitive DNA, namely the telomeres, and is implicated in the regulation of antigenic variation. Probably also acts as a DNA helicase. Recognizes and binds specific regions of the genome, hydrolyzes ATP and allows the DNA base J de novo synthesis. Involved in initial synthesis of DNA base J, JBP1 being able to act via the basal level of DNA base J and propagate further synthesis. In contrast to JBP1, it does not specifically bind DNA base J, however it binds chromatin. This is Bifunctional helicase and thymine dioxygenase JBP2 (JBP2) from Leishmania infantum.